The following is a 282-amino-acid chain: Acetylglutamate kinase (282 aa).

Substrate contacts are provided by residues 62-63, arginine 84, and asparagine 178; that span reads GG.

The protein belongs to the acetylglutamate kinase family. ArgB subfamily.

It localises to the cytoplasm. The enzyme catalyses N-acetyl-L-glutamate + ATP = N-acetyl-L-glutamyl 5-phosphate + ADP. It functions in the pathway amino-acid biosynthesis; L-arginine biosynthesis; N(2)-acetyl-L-ornithine from L-glutamate: step 2/4. In terms of biological role, catalyzes the ATP-dependent phosphorylation of N-acetyl-L-glutamate. The polypeptide is Acetylglutamate kinase (Thermotoga neapolitana (strain ATCC 49049 / DSM 4359 / NBRC 107923 / NS-E)).